The chain runs to 770 residues: Probable capsid and replication-associated protein (770 aa).

Disordered regions lie at residues 645-682 (QRMQ…QKES) and 697-717 (WEDS…TQTV). The span at 646-656 (RMQQQPTTTDI) shows a compositional bias: polar residues. Over residues 666–681 (RDTEVYHSSQEGEQKE) the composition is skewed to basic and acidic residues. Residues 703–717 (EESGSQSSEEETQTV) show a composition bias toward low complexity.

Belongs to the anelloviridae capsid protein family.

It is found in the virion. Its function is as follows. May self assemble to form an icosahedral capsid. Presumably essential to initiate and monitor viral genome replication by a rolling circle mechanism. The sequence is that of Probable capsid and replication-associated protein from Homo sapiens (Human).